Consider the following 42-residue polypeptide: Potassium channel toxin gamma-KTx 1.5 (42 aa).

Intrachain disulfides connect cysteine 5–cysteine 23, cysteine 11–cysteine 34, cysteine 20–cysteine 39, and cysteine 24–cysteine 41.

It belongs to the ergtoxin family. Gamma-KTx 1 subfamily. As to expression, expressed by the venom gland.

It localises to the secreted. Functionally, blocks Kv11/ERG potassium channels. In Centruroides limpidus (Mexican scorpion), this protein is Potassium channel toxin gamma-KTx 1.5.